The sequence spans 1857 residues: Chitin synthase Y (1857 aa).

The segment at 1–22 (MVGPSPAGTVPSHAQSSLPSLP) is disordered. Positions 1–788 (MVGPSPAGTV…CWADLAKVGE (788 aa)) constitute a Myosin motor domain. 102-109 (GESGAGKT) contributes to the ATP binding site. The interval 601–653 (SSKPLRMPSMARRKASPASRLTFDAPTAEEPEDNESYGGSTAKSSGRRKSAMS) is disordered. N-linked (GlcNAc...) asparagine glycosylation occurs at Asn-634. The segment at 668-692 (LEIVNKCLSSPSLNPYFIFCLKPND) is actin-binding. 2 consecutive transmembrane segments (helical) span residues 898–918 (WMAI…RLFG) and 937–957 (LIIW…PGLV). In terms of domain architecture, Cytochrome b5 heme-binding spans 961–1020 (QHVYSAAELESHNGKNGHDSYIAIRGVVFDLDKFMPRHYPDIVPQSSLKKYAGMDATGLF). Residues Asn-1047 and Asn-1072 are each glycosylated (N-linked (GlcNAc...) asparagine). Residues 1209–1229 (FILAISILICAVVIFKFAAAL) traverse the membrane as a helical segment. Asn-1572 carries an N-linked (GlcNAc...) asparagine glycan. Transmembrane regions (helical) follow at residues 1603–1623 (LLST…IVWL), 1630–1650 (IPWT…LIFI), and 1657–1677 (MIGW…ALPF). The DEK-C domain occupies 1799–1854 (LPSDDAILAEIREILRTADLMTVTKKSIKQELERRFGVNLDAKRPYINSATEAVLS).

It in the N-terminal section; belongs to the TRAFAC class myosin-kinesin ATPase superfamily. Myosin family. In the C-terminal section; belongs to the chitin synthase family. Class V subfamily.

It localises to the cell membrane. It is found in the cell septum. Its subcellular location is the cell tip. The enzyme catalyses [(1-&gt;4)-N-acetyl-beta-D-glucosaminyl](n) + UDP-N-acetyl-alpha-D-glucosamine = [(1-&gt;4)-N-acetyl-beta-D-glucosaminyl](n+1) + UDP + H(+). Polymerizes chitin, a structural polymer of the cell wall and septum, by transferring the sugar moiety of UDP-GlcNAc to the non-reducing end of the growing chitin polymer. Specifically involved in hyphal elongation and new cell wall formation. The sequence is that of Chitin synthase Y from Aspergillus oryzae (strain ATCC 42149 / RIB 40) (Yellow koji mold).